Consider the following 710-residue polypeptide: Secretin OutD (710 aa).

The first 27 residues, 1 to 27 (MLGKGIKKSWGWLGLTVLLLGSPCGWA), serve as a signal peptide directing secretion. Residues 28-105 (AEFSASFKGT…DNGVLKVIRS (78 aa)) form an N0 region. The N1 stretch occupies residues 123-190 (IGDELVTRVV…DIVNTVDKTG (68 aa)). The tract at residues 192–262 (REMVTVPLTY…VEMIRQLDRK (71 aa)) is N2. The interval 288–399 (GNGTSGNRNS…INQLDIRRPQ (112 aa)) is N3. The interval 289-353 (NGTSGNRNSS…AFGSTSSSGG (65 aa)) is disordered. The segment at 401 to 648 (LVEAIIAEIQ…MLFLRPTIIR (248 aa)) is secretin. Positions 691–710 (TYTFRQVQSSISDFYKPEGR) are s domain.

Belongs to the bacterial secretin family. GSP D subfamily. In terms of assembly, forms a cylindrical channel with 15 subunits. Interacts with pilotin OutS.

It is found in the cell outer membrane. In terms of biological role, involved in a type II secretion system (T2SS, formerly general secretion pathway, GSP) for the export of proteins. Required for the translocation of the multiple pectic enzymes. This subunit forms the outer membrane channel. In Dickeya dadantii (strain 3937) (Erwinia chrysanthemi (strain 3937)), this protein is Secretin OutD (outD).